A 197-amino-acid chain; its full sequence is Imidazoleglycerol-phosphate dehydratase (197 aa).

It belongs to the imidazoleglycerol-phosphate dehydratase family.

It localises to the cytoplasm. The catalysed reaction is D-erythro-1-(imidazol-4-yl)glycerol 3-phosphate = 3-(imidazol-4-yl)-2-oxopropyl phosphate + H2O. It functions in the pathway amino-acid biosynthesis; L-histidine biosynthesis; L-histidine from 5-phospho-alpha-D-ribose 1-diphosphate: step 6/9. This is Imidazoleglycerol-phosphate dehydratase from Syntrophomonas wolfei subsp. wolfei (strain DSM 2245B / Goettingen).